A 250-amino-acid polypeptide reads, in one-letter code: Archaeal flagellar motor scaffold protein FlaX (250 aa).

At 1 to 9 the chain is on the extracellular side; it reads MAIQDLLQS. The chain crosses the membrane as a helical span at residues 10–30; that stretch reads SLFIILIGVGIPIAAFLEILF. Over 31 to 250 the chain is Cytoplasmic; sequence RVILPKTKRV…MILEGGGVNG (220 aa). Residues 42–61 are compositionally biased toward polar residues; the sequence is TQQSPQNISQEQRFPTQQKP. The segment at 42 to 72 is disordered; the sequence is TQQSPQNISQEQRFPTQQKPANDETSKYSSD. The segment covering 62-72 has biased composition (basic and acidic residues); sequence ANDETSKYSSD.

The S.acidocaldarius archaellum assembly machinery and its filament consist of seven proteins (FlaB, FlaF, FlaG, FlaH, FlaI, FlaJ and FlaX). FlaX assembles into ring-shaped oligomers. Interacts directly with FlaH and the motor ATPase FlaI.

The protein resides in the archaeal flagellum. The protein localises to the cell membrane. With respect to regulation, the presence of the flagellar core components FlaH, FlaI and FlaJ seems to be crucial for the stability of FlaX. Its function is as follows. Component of the archaellum. FlaX, FlaH and FlaI form the core cytoplasmic motor complex of the crenarchaeal archaellum. FlaX forms a ring that may act as a membrane-bound cytoplasmic scaffold that guides the assembly of the archaellum motor complex. Is essential for archaellum assembly. The protein is Archaeal flagellar motor scaffold protein FlaX of Sulfolobus acidocaldarius (strain ATCC 33909 / DSM 639 / JCM 8929 / NBRC 15157 / NCIMB 11770).